Reading from the N-terminus, the 357-residue chain is DNA replication and repair protein RecF (357 aa).

An ATP-binding site is contributed by 30–37 (GANGSGKT).

Belongs to the RecF family.

The protein localises to the cytoplasm. Its function is as follows. The RecF protein is involved in DNA metabolism; it is required for DNA replication and normal SOS inducibility. RecF binds preferentially to single-stranded, linear DNA. It also seems to bind ATP. This is DNA replication and repair protein RecF from Escherichia coli O6:K15:H31 (strain 536 / UPEC).